The chain runs to 296 residues: Acetylglutamate kinase (296 aa).

Substrate contacts are provided by residues G68–G69, R90, and N195.

This sequence belongs to the acetylglutamate kinase family. ArgB subfamily.

The protein localises to the cytoplasm. It catalyses the reaction N-acetyl-L-glutamate + ATP = N-acetyl-L-glutamyl 5-phosphate + ADP. Its pathway is amino-acid biosynthesis; L-arginine biosynthesis; N(2)-acetyl-L-ornithine from L-glutamate: step 2/4. In terms of biological role, catalyzes the ATP-dependent phosphorylation of N-acetyl-L-glutamate. The sequence is that of Acetylglutamate kinase from Desulfotalea psychrophila (strain LSv54 / DSM 12343).